The primary structure comprises 101 residues: MDPQSAIYTLPRVPTAAPTTGGVSWSHVGEVAILSFVALICIYLLYLWVLRDLILVLKARRGRSTEELIFGSEAVDRRHPIPNTLVPTAPVHPGPFVPGQG.

The helical transmembrane segment at 30 to 50 threads the bilayer; it reads EVAILSFVALICIYLLYLWVL.

Belongs to the mastrevirus movement protein family. As to quaternary structure, interacts with the capsid protein (CP). Part of a MP-CP-viral DNA complex.

It is found in the host membrane. Functionally, involved in the viral transport within, and between cells. The sequence is that of Movement protein from Maize streak virus genotype D (isolate Raw) (MSV).